A 187-amino-acid polypeptide reads, in one-letter code: F-box protein At5g41720 (187 aa).

The 48-residue stretch at 2–49 (MMNSPLDYDVLLEIMSYCPATEMAKFRLLSKECNKRSYEMSFINRHLH) folds into the F-box domain.

The polypeptide is F-box protein At5g41720 (Arabidopsis thaliana (Mouse-ear cress)).